The chain runs to 136 residues: Large-conductance mechanosensitive channel (136 aa).

2 consecutive transmembrane segments (helical) span residues 9 to 29 (AFASRGNVIDMAVGIIIGAAF) and 79 to 99 (IQTIIDFTIIAFAIFMGLKAI).

Belongs to the MscL family. As to quaternary structure, homopentamer.

It localises to the cell inner membrane. Its function is as follows. Channel that opens in response to stretch forces in the membrane lipid bilayer. May participate in the regulation of osmotic pressure changes within the cell. The protein is Large-conductance mechanosensitive channel of Shewanella sp. (strain ANA-3).